The following is an 823-amino-acid chain: Ubiquitin carboxyl-terminal hydrolase 16 (823 aa).

The UBP-type zinc-finger motif lies at 22–142; that stretch reads PVCRHIRKGL…QVVDYVRKQA (121 aa). Positions 24, 26, 48, 51, 74, 77, 82, 90, 94, 103, 116, and 119 each coordinate Zn(2+). A Glycyl lysine isopeptide (Lys-Gly) (interchain with G-Cter in SUMO2) cross-link involves residue lysine 140. Residues 146–189 are disordered; it reads TPKPAEKDNGNIELENKKLEKESKNEQEREKKENMAKENPPMNS. The segment covering 149 to 181 has biased composition (basic and acidic residues); sequence PAEKDNGNIELENKKLEKESKNEQEREKKENMA. Serine 189 carries the post-translational modification Phosphoserine. The USP domain maps to 196–822; the sequence is KGLSNLGNTC…QAYLLFYERI (627 aa). Cysteine 205 acts as the Nucleophile in catalysis. The span at 394-408 shows a compositional bias: basic and acidic residues; that stretch reads SGKKSVNDKNLKKTV. The disordered stretch occupies residues 394 to 460; sequence SGKKSVNDKN…AKNQRRQQKI (67 aa). A compositionally biased stretch (acidic residues) spans 409-420; that stretch reads EDEDQDSEEEKD. A Phosphoserine modification is found at serine 415. The span at 421–430 shows a compositional bias: basic and acidic residues; that stretch reads NDSYIKERSD. The span at 438–458 shows a compositional bias: basic residues; that stretch reads HLQKKAKKQAKKQAKNQRRQQ. Phosphoserine is present on residues serine 531 and serine 552. Threonine 554 is modified (phosphothreonine). Residue histidine 758 is the Proton acceptor of the active site.

Belongs to the peptidase C19 family. USP16 subfamily. Homotetramer. Associates with late pre-40S ribosomes. Interacts with CEP78; promoting deubiquitination of tektins. Phosphorylated at the onset of mitosis and dephosphorylated during the metaphase/anaphase transition. Phosphorylation by AURKB enhances the deubiquitinase activity. As to expression, present in all the tissues examined including fetal brain, lung, liver, kidney, and adult heart, brain, placenta, lung, liver, skeletal muscle, kidney and pancreas.

The protein resides in the nucleus. It is found in the cytoplasm. The enzyme catalyses Thiol-dependent hydrolysis of ester, thioester, amide, peptide and isopeptide bonds formed by the C-terminal Gly of ubiquitin (a 76-residue protein attached to proteins as an intracellular targeting signal).. Functionally, specifically deubiquitinates 'Lys-120' of histone H2A (H2AK119Ub), a specific tag for epigenetic transcriptional repression, thereby acting as a coactivator. Deubiquitination of histone H2A is a prerequisite for subsequent phosphorylation at 'Ser-11' of histone H3 (H3S10ph), and is required for chromosome segregation when cells enter into mitosis. In resting B- and T-lymphocytes, phosphorylation by AURKB leads to enhance its activity, thereby maintaining transcription in resting lymphocytes. Regulates Hox gene expression via histone H2A deubiquitination. Prefers nucleosomal substrates. Does not deubiquitinate histone H2B. Also deubiquitinates non-histone proteins, such as ribosomal protein RPS27A: deubiquitination of monoubiquitinated RPS27A promotes maturation of the 40S ribosomal subunit. Also mediates deubiquitination of tektin proteins (TEKT1, TEKT2, TEK3, TEKT4 and TEKT5), promoting their stability. This Homo sapiens (Human) protein is Ubiquitin carboxyl-terminal hydrolase 16.